The sequence spans 335 residues: Type 1 fimbrin D-mannose specific adhesin (335 aa).

The N-terminal stretch at 1-22 is a signal peptide; that stretch reads MKIYSALLLAGTALFFTHPALA.

This sequence belongs to the fimbrial protein family.

The protein localises to the fimbrium. Functionally, involved in regulation of length and mediation of adhesion of type 1 fimbriae (but not necessary for the production of fimbriae). A mannose-binding adhesin. This is Type 1 fimbrin D-mannose specific adhesin (fimH) from Salmonella typhimurium (strain LT2 / SGSC1412 / ATCC 700720).